The following is a 71-amino-acid chain: MKEGIHPKLVPARIICGCGNVIETYSTKPEIYVEVCSKCHPFYTGQQRFVDTEGRVERFQRRYGDSYRKGR.

4 residues coordinate Zn(2+): Cys-16, Cys-18, Cys-36, and Cys-39.

Belongs to the bacterial ribosomal protein bL31 family. Type A subfamily. As to quaternary structure, part of the 50S ribosomal subunit. Zn(2+) is required as a cofactor.

In terms of biological role, binds the 23S rRNA. In Thermus thermophilus (strain ATCC BAA-163 / DSM 7039 / HB27), this protein is Large ribosomal subunit protein bL31.